Here is an 857-residue protein sequence, read N- to C-terminus: Potassium channel AKT1 (857 aa).

The Cytoplasmic segment spans residues 1 to 61; that stretch reads MRGGALLCGQ…PYDHKYRIWE (61 aa). A helical membrane pass occupies residues 62 to 82; the sequence is AFLVVLVVYTAWVSPFEFGFL. Topologically, residues 83 to 90 are extracellular; it reads RKPRPPLS. Residues 91–111 traverse the membrane as a helical segment; it reads ITDNIVNAFFAIDIIMTFFVG. The Cytoplasmic portion of the chain corresponds to 112–134; it reads YLDKSTYLIVDDRKQIAFKYLRS. The chain crosses the membrane as a helical span at residues 135–155; sequence WFLLDLVSTIPSEAAMRISSQ. Residues 156 to 158 lie on the Extracellular side of the membrane; sequence SYG. A helical; Voltage-sensor membrane pass occupies residues 159 to 179; sequence LFNMLRLWRLRRVGALFARLE. Over 180–193 the chain is Cytoplasmic; that stretch reads KDRNFNYFWVRCAK. Residues 194 to 214 traverse the membrane as a helical segment; it reads LVCVTLFAVHCAACFYYLIAA. Residues 215-241 lie on the Extracellular side of the membrane; it reads RNSNPAKTWIGANVANFLEESLWMRYV. The pore-forming intramembrane region spans 242–261; that stretch reads TSMYWSITTLTTVGYGDLHP. The Extracellular segment spans residues 262 to 265; that stretch reads VNTK. Residues 266 to 286 traverse the membrane as a helical segment; it reads EMIFDIFYMLFNLGLTAYLIG. The Cytoplasmic segment spans residues 287-857; the sequence is NMTNLVVHGT…GDHLIFATDS (571 aa). Residue 372 to 493 coordinates a nucleoside 3',5'-cyclic phosphate; it reads LFRGVSNDLL…IMNNLLQHLK (122 aa). ANK repeat units follow at residues 515 to 546, 550 to 579, 583 to 612, 614 to 643, 647 to 676, and 680 to 709; these read KMDLPLNLCFAAIREDDLLLHQLLKRGLDPNE, NGRTPLHIAASKGTLNCVLLLLEYHADPNC, EGSVPLWEAMVEGHEKVVKVLLEHGSTIDA, DVGHFACTAAEQGNLKLLKEIVLHGGDVTR, TGTSALHTAVCEENIEMVKYLLEQGADVNK, and HGWTPRDLAEQQGHEDIKALFREKLHERRV. Residues 790–857 form the KHA domain; the sequence is RVTISCAEKD…GDHLIFATDS (68 aa).

Belongs to the potassium channel family. Plant (TC 1.A.1.4) subfamily. As to quaternary structure, the potassium channel is probably composed of a homo- or heterotetrameric complex of pore-forming subunits. Possible heteromultimer with AKT2 or KAT3. Part of a K(+)-channel calcium-sensing kinase/phosphatase complex composed by a calcium sensor CBL (CBL1, CBL2, CBL3 or CBL9), a kinase CIPK (CIPK6, CIPK16 or CIPK23), a phosphatase PP2C (AIP1) and a K(+)-channel (AKT1). Interacts directly with AIP1, CBL10, CIPK6, CIPK16 and CIPK23. In terms of processing, phosphorylated by CIPK proteins CIPK6, CIPK16 and CIPK23. The activation by phosphorylation is induced by low K(+) conditions and stimulates K(+) uptake and relocation. Dephosphorylation by AIP1 repressed the transport activity. As to expression, preferentially expressed in the peripheral cell layers of root mature including root cortex and root hairs. Detected also, at a lower level, in the mesophyll of the leaves and at restricted sites corresponding to hydathodes and guard cells.

It localises to the cell membrane. Functionally, highly selective inward-rectifying potassium channel that mediate potassium uptake by plant roots in response to low K(+) conditions, by a calcium-, CBL-, and CIPK-dependent pathway. Positively regulated by phosphorylation by CIPK23. Negatively regulated by a kinase-independent regulatory mechanism involving a competing direct binding of CBL10. Involved in the stomatal regulation by monitoring the turgor pressure in guard cells. Assuming opened or closed conformations in response to the voltage difference across the membrane, the channel is activated by hyperpolarization. May interact with the cytoskeleton or with regulatory proteins. Is essential with POT5/HAK5 for high-affinity potassium uptake in roots during seedling establishment and postgermination growth under low potassium conditions. The polypeptide is Potassium channel AKT1 (AKT1) (Arabidopsis thaliana (Mouse-ear cress)).